The following is a 361-amino-acid chain: Protein-L-isoaspartate O-methyltransferase domain-containing protein 2 (361 aa).

Residue glycine 2 is the site of N-myristoyl glycine attachment. The active site involves serine 64. 3 adoMet binding motif regions span residues 85–94 (LNLGSGTGYL), 160–164 (YDRVY), and 181–191 (LKVGGILVMPL). A BC-box region spans residues 240–250 (VRSLQDLARIA). Polar residues predominate over residues 303–312 (SNPSDDNSSG). Residues 303-335 (SNPSDDNSSGDLEEERREEEATTPPDAKPEPPV) form a disordered region. The interval 345–348 (LPLP) is CUL-box.

Belongs to the methyltransferase superfamily. L-isoaspartyl/D-aspartyl protein methyltransferase family.

It is found in the cytoplasm. In terms of biological role, may act as a substrate recognition component of an ECS (Elongin BC-CUL5-SOCS-box protein) E3 ubiquitin ligase complex which mediates the ubiquitination and subsequent proteasomal degradation of target proteins. May bind to the methyltransferase cofactor S-adenosylmethionine (AdoMet) via the N-terminal AdoMet binding motif, but probably does not display methyltransferase activity. The polypeptide is Protein-L-isoaspartate O-methyltransferase domain-containing protein 2 (PCMTD2) (Bos taurus (Bovine)).